The sequence spans 171 residues: Inosine/xanthosine triphosphatase (171 aa).

A substrate-binding site is contributed by 8-13 (TTNPAK). Mg(2+) contacts are provided by Glu38 and Gln68.

Belongs to the YjjX NTPase family. As to quaternary structure, homodimer. It depends on Mg(2+) as a cofactor. Mn(2+) serves as cofactor.

It carries out the reaction XTP + H2O = XDP + phosphate + H(+). It catalyses the reaction ITP + H2O = IDP + phosphate + H(+). Functionally, phosphatase that hydrolyzes non-canonical purine nucleotides such as XTP and ITP to their respective diphosphate derivatives. Probably excludes non-canonical purines from DNA/RNA precursor pool, thus preventing their incorporation into DNA/RNA and avoiding chromosomal lesions. This Citrobacter koseri (strain ATCC BAA-895 / CDC 4225-83 / SGSC4696) protein is Inosine/xanthosine triphosphatase.